The following is a 108-amino-acid chain: Phosphoribosyl-AMP cyclohydrolase (108 aa).

Mg(2+) is bound at residue Asp-72. Cys-73 serves as a coordination point for Zn(2+). Mg(2+)-binding residues include Asp-74 and Asp-76. Residues Cys-89 and Cys-96 each contribute to the Zn(2+) site.

This sequence belongs to the PRA-CH family. Homodimer. The cofactor is Mg(2+). It depends on Zn(2+) as a cofactor.

It localises to the cytoplasm. The enzyme catalyses 1-(5-phospho-beta-D-ribosyl)-5'-AMP + H2O = 1-(5-phospho-beta-D-ribosyl)-5-[(5-phospho-beta-D-ribosylamino)methylideneamino]imidazole-4-carboxamide. It participates in amino-acid biosynthesis; L-histidine biosynthesis; L-histidine from 5-phospho-alpha-D-ribose 1-diphosphate: step 3/9. Catalyzes the hydrolysis of the adenine ring of phosphoribosyl-AMP. This chain is Phosphoribosyl-AMP cyclohydrolase, found in Archaeoglobus fulgidus (strain ATCC 49558 / DSM 4304 / JCM 9628 / NBRC 100126 / VC-16).